We begin with the raw amino-acid sequence, 184 residues long: Probable RNA 2'-phosphotransferase (184 aa).

The protein belongs to the KptA/TPT1 family.

In terms of biological role, removes the 2'-phosphate from RNA via an intermediate in which the phosphate is ADP-ribosylated by NAD followed by a presumed transesterification to release the RNA and generate ADP-ribose 1''-2''-cyclic phosphate (APPR&gt;P). May function as an ADP-ribosylase. The sequence is that of Probable RNA 2'-phosphotransferase from Escherichia coli O9:H4 (strain HS).